Reading from the N-terminus, the 139-residue chain is MSEEQQTVNIKKKEKWGVAHIYASYNNTIIHITDLTGAETISKWSGGMVVKADRDESSPYAAMIAARRAAEEAMEKGINGVHIKVRAPGGSKSKNPGPGAQAAIRALARAGLRIGRVEDVTPIPHDGTRPKGGRRGRRV.

The interval 118–139 (EDVTPIPHDGTRPKGGRRGRRV) is disordered.

Belongs to the universal ribosomal protein uS11 family. Part of the 30S ribosomal subunit.

Its function is as follows. Located on the platform of the 30S subunit. The polypeptide is Small ribosomal subunit protein uS11 (Thermococcus sibiricus (strain DSM 12597 / MM 739)).